The chain runs to 197 residues: Protocatechuate 3,4-dioxygenase alpha chain (197 aa).

Residue arginine 130 coordinates 3,4-dihydroxybenzoate.

The protein belongs to the intradiol ring-cleavage dioxygenase family. As to quaternary structure, the enzyme is an oligomer of 12 copies of the alpha and beta chains. The cofactor is Fe(3+).

It catalyses the reaction 3,4-dihydroxybenzoate + O2 = 3-carboxy-cis,cis-muconate + 2 H(+). The protein operates within aromatic compound metabolism; beta-ketoadipate pathway; 3-carboxy-cis,cis-muconate from 3,4-dihydroxybenzoate: step 1/1. Functionally, plays an essential role in the utilization of numerous aromatic and hydroaromatic compounds via the beta-ketoadipate pathway. This chain is Protocatechuate 3,4-dioxygenase alpha chain (pcaG), found in Burkholderia cepacia (Pseudomonas cepacia).